The primary structure comprises 641 residues: Epithelial sodium channel subunit beta (641 aa).

The Cytoplasmic segment spans residues 1–50 (MHLKKYLLKGLHRLQKGPGYSYKELLVWYCNNTNTHGPKRIICEGPKKKA). Residues 51–71 (MWFLITLLFTSLVCWQWGVFI) form a helical membrane-spanning segment. Over 72–533 (RTYLSWEVSV…GGQFGFWMGG (462 aa)) the chain is Extracellular. 9 cysteine pairs are disulfide-bonded: Cys98–Cys273, Cys185–Cys190, Cys197–Cys204, Cys250–Cys257, Cys362–Cys449, Cys387–Cys445, Cys391–Cys441, Cys400–Cys427, and Cys402–Cys416. N-linked (GlcNAc...) asparagine glycosylation is present at Asn141. Asn261 is a glycosylation site (N-linked (GlcNAc...) asparagine). A helical membrane pass occupies residues 534-554 (SVLCLIEFGEILIDFVWITII). Residues 555 to 641 (KLVAFAKSLR…IESDSEGDAI (87 aa)) lie on the Cytoplasmic side of the membrane. Residues 593–624 (PDVARPGPDPGTYPDEQTLPIPGTPPPNYDSL) are disordered. Positions 617–621 (PPPNY) match the PY motif; recruits WW domain-containing proteins and is thereby required for ubiquitination and inhibition of the channel by NEDD4 and NEDD4L motif. Phosphoserine is present on residues Ser634 and Ser636.

This sequence belongs to the amiloride-sensitive sodium channel (TC 1.A.6) family. SCNN1B subfamily. As to quaternary structure, component of the heterotrimeric epithelial sodium channel (ENaC) composed of an alpha/SCNN1A, a beta/SCNN1B and a gamma/SCNN1G subunit. An additional delta/SCNN1D subunit can replace the alpha/SCNN1A subunit to form an alternative channel with specific properties. Interacts with WWP1 (via WW domains). Interacts with WWP2 (via WW domains); inhibits the channel. Interacts with the full-length immature form of PCSK9 (pro-PCSK9). Interacts (N-glycosylated) with BPIFA1; the interaction is direct and inhibits the proteolytic processing of SCNN1A and SCNN1G and the activation of ENaC. Ubiquitinated. Can be ubiquitinated at multiple sites and undergo monoubiquitination and polyubiquitination. Ubiquitination by NEDD4 or NEDD4L inhibits the ENaC channel through endocytosis, intracellular retention and degradation of its individual subunits. However, some studies could not confirm the ubiquitination of this subunit of the ENaC. In terms of processing, phosphorylated on serine and threonine residues. Aldosterone and insulin increase the basal level of phosphorylation. Post-translationally, N-glycosylated. N-glycosylation is required for interaction with BPIFA1.

It localises to the apical cell membrane. The protein localises to the cytoplasmic vesicle membrane. It catalyses the reaction Na(+)(in) = Na(+)(out). Its activity is regulated as follows. Originally identified and characterized by its inhibition by the diuretic drug amiloride. Its function is as follows. This is one of the three pore-forming subunits of the heterotrimeric epithelial sodium channel (ENaC), a critical regulator of sodium balance and fluid homeostasis. ENaC operates in epithelial tissues, where it mediates the electrodiffusion of sodium ions from extracellular fluid through the apical membrane of cells, with water following osmotically. It plays a key role in maintaining sodium homeostasis through electrogenic sodium reabsorption in the kidneys. Additionally, ENaC is essential for airway surface liquid homeostasis, which is crucial for proper mucus clearance. This is Epithelial sodium channel subunit beta from Canis lupus familiaris (Dog).